Consider the following 364-residue polypeptide: 3-methyl-2-oxobutanoate hydroxymethyltransferase 1, mitochondrial (364 aa).

Residues 1–59 (MMMMMRRAFRHLARQQRRPLSHVPESAVYGGPRPQDVGAAAGAGAGAGATRRVTVTTLR) constitute a mitochondrion transit peptide. Residues D94 and D133 each coordinate Mg(2+). Residues 94–95 (DS), D133, and K163 contribute to the 3-methyl-2-oxobutanoate site. Mg(2+) is bound at residue E165. The active-site Proton acceptor is E233.

Belongs to the PanB family. The cofactor is Mg(2+).

It is found in the mitochondrion. It carries out the reaction 3-methyl-2-oxobutanoate + (6R)-5,10-methylene-5,6,7,8-tetrahydrofolate + H2O = 2-dehydropantoate + (6S)-5,6,7,8-tetrahydrofolate. The protein operates within cofactor biosynthesis; (R)-pantothenate biosynthesis; (R)-pantoate from 3-methyl-2-oxobutanoate: step 1/2. Catalyzes the reversible reaction in which hydroxymethyl group from 5,10-methylenetetrahydrofolate is transferred onto alpha-ketoisovalerate to form ketopantoate. The sequence is that of 3-methyl-2-oxobutanoate hydroxymethyltransferase 1, mitochondrial (KPHMT1) from Oryza sativa subsp. japonica (Rice).